The primary structure comprises 115 residues: DNA-binding protein STK_13740 (115 aa).

It belongs to the PDCD5 family.

This is DNA-binding protein STK_13740 from Sulfurisphaera tokodaii (strain DSM 16993 / JCM 10545 / NBRC 100140 / 7) (Sulfolobus tokodaii).